Here is a 736-residue protein sequence, read N- to C-terminus: Microtubule-associated protein mu-2 (736 aa).

It belongs to the orthoreovirus mu-2 protein family. In terms of assembly, interacts with protein mu-NS; in viral inclusions. Interacts with polymerase lambda-3; this interaction stimulates the ATPase activity of mu-2. Requires a divalent metal cation as cofactor.

It localises to the virion. The protein localises to the host cytoplasm. It is found in the host cytoskeleton. Functionally, minor inner capsid (core) component. Displays NTPase and RNA 5'-triphosphatase (RTPase) activities. ATP is the preferred substrate for hydrolysis. May function as a cofactor of polymerase lambda-3. Associates with microtubules and plays a role in the formation, structural organization and morphology of viral inclusions, where the assembly of cores and the replication of viral RNA occur. Together with mu-NS, recruits the other core proteins to these inclusions. The sequence is that of Microtubule-associated protein mu-2 (M1) from Mammalia (T2J).